The sequence spans 298 residues: Ankyrin repeat domain-containing protein 29 (298 aa).

8 ANK repeats span residues 8 to 38, 42 to 71, 75 to 104, 108 to 137, 141 to 170, 174 to 203, 207 to 236, and 239 to 268; these read PLANAVFWAARKGNLALLQLLLNSGRVDVDC, YGTTALMVASYSGHYECVRELIMQGADINL, TGSTALFFASQQGHNEIVKLLFEFGASTEF, DGGTALCAACQFGHSRVVDTLLKNGANVHD, DGATALFLASQEGHVNLIRQLLSSGAKVNQ, DGTAPLWMAAQMGHSEVVKVLLLRGADRDA, DGSTALFKAAHKGHCSVMEELLKFSPSLGI, and NGSTALHAAVMGGSLKAVDLLLKANADPAL.

This chain is Ankyrin repeat domain-containing protein 29 (ankrd29), found in Danio rerio (Zebrafish).